Consider the following 150-residue polypeptide: Large ribosomal subunit protein bL9 (150 aa).

The protein belongs to the bacterial ribosomal protein bL9 family.

Its function is as follows. Binds to the 23S rRNA. This chain is Large ribosomal subunit protein bL9, found in Ruthia magnifica subsp. Calyptogena magnifica.